A 361-amino-acid polypeptide reads, in one-letter code: Probable cinnamyl alcohol dehydrogenase (361 aa).

Cys48 is a binding site for Zn(2+). Thr50 provides a ligand contact to NADP(+). Zn(2+) is bound by residues His70, Glu71, Cys101, Cys104, Cys107, Cys115, and Cys164. NADP(+) contacts are provided by residues Thr168, 189–194 (GLGGVG), 212–217 (SSSDKK), Thr252, Gly276, and 299–301 (SFI).

The protein belongs to the zinc-containing alcohol dehydrogenase family. As to quaternary structure, homodimer. The cofactor is Zn(2+).

The enzyme catalyses (E)-cinnamyl alcohol + NADP(+) = (E)-cinnamaldehyde + NADPH + H(+). It catalyses the reaction (E)-coniferol + NADP(+) = (E)-coniferaldehyde + NADPH + H(+). The catalysed reaction is (E)-sinapyl alcohol + NADP(+) = (E)-sinapaldehyde + NADPH + H(+). It carries out the reaction (E)-4-coumaroyl alcohol + NADP(+) = (E)-4-coumaraldehyde + NADPH + H(+). The enzyme catalyses (E)-caffeyl alcohol + NADP(+) = (E)-caffeyl aldehyde + NADPH + H(+). Its pathway is aromatic compound metabolism; phenylpropanoid biosynthesis. Its function is as follows. Involved in lignin biosynthesis. Catalyzes the final step specific for the production of lignin monomers. Catalyzes the NADPH-dependent reduction of coniferaldehyde, 5-hydroxyconiferaldehyde, sinapaldehyde, 4-coumaraldehyde and caffeyl aldehyde to their respective alcohols. This is Probable cinnamyl alcohol dehydrogenase from Lolium perenne (Perennial ryegrass).